The sequence spans 190 residues: Small ribosomal subunit protein eS7A (190 aa).

At Ser-2 the chain carries N-acetylserine. Residues Lys-83, Lys-84, and Lys-124 each participate in a glycyl lysine isopeptide (Lys-Gly) (interchain with G-Cter in ubiquitin) cross-link.

It belongs to the eukaryotic ribosomal protein eS7 family. As to quaternary structure, component of the small ribosomal subunit (SSU). Mature yeast ribosomes consist of a small (40S) and a large (60S) subunit. The 40S small subunit contains 1 molecule of ribosomal RNA (18S rRNA) and 33 different proteins (encoded by 57 genes). The large 60S subunit contains 3 rRNA molecules (25S, 5.8S and 5S rRNA) and 46 different proteins (encoded by 81 genes). Interacts with snoRNA U3. uS11 interacts with MPP10. Component of the ribosomal small subunit (SSU) processome composed of at least 40 protein subunits and snoRNA U3. In terms of processing, N-terminally acetylated by acetyltransferase NatA. Post-translationally, ubiquitinated at Lys-83 and Lys-84 in response to stalled ribosomes, leading to activation of the No-Go Decay (NGD) pathway: first monoubiquitinated by MOT2/NOT4, followed by formation by HEL2 of 'Lys-63'-linked polyubiquitin chains on monoubiquitin.

Its subcellular location is the cytoplasm. The protein resides in the nucleus. It is found in the nucleolus. In terms of biological role, component of the ribosome, a large ribonucleoprotein complex responsible for the synthesis of proteins in the cell. The small ribosomal subunit (SSU) binds messenger RNAs (mRNAs) and translates the encoded message by selecting cognate aminoacyl-transfer RNA (tRNA) molecules. The large subunit (LSU) contains the ribosomal catalytic site termed the peptidyl transferase center (PTC), which catalyzes the formation of peptide bonds, thereby polymerizing the amino acids delivered by tRNAs into a polypeptide chain. The nascent polypeptides leave the ribosome through a tunnel in the LSU and interact with protein factors that function in enzymatic processing, targeting, and the membrane insertion of nascent chains at the exit of the ribosomal tunnel. eS7 is involved in nucleolar processing of pre-18S ribosomal RNA and ribosome assembly. The chain is Small ribosomal subunit protein eS7A from Saccharomyces cerevisiae (strain ATCC 204508 / S288c) (Baker's yeast).